A 546-amino-acid chain; its full sequence is Glucose-6-phosphate isomerase (546 aa).

The active-site Proton donor is Glu358. Residues His389 and Lys504 contribute to the active site.

Belongs to the GPI family.

It is found in the cytoplasm. The catalysed reaction is alpha-D-glucose 6-phosphate = beta-D-fructose 6-phosphate. The protein operates within carbohydrate biosynthesis; gluconeogenesis. It functions in the pathway carbohydrate degradation; glycolysis; D-glyceraldehyde 3-phosphate and glycerone phosphate from D-glucose: step 2/4. Its function is as follows. Catalyzes the reversible isomerization of glucose-6-phosphate to fructose-6-phosphate. The sequence is that of Glucose-6-phosphate isomerase from Desulfosudis oleivorans (strain DSM 6200 / JCM 39069 / Hxd3) (Desulfococcus oleovorans).